A 447-amino-acid polypeptide reads, in one-letter code: MTRLFGTDGVRGLANKTLTAPLALKLGAAAAHVLTAGTRPHGRRPVAIVGRDPRVSGEMLAAALAAGMASRGVDVLRVGVIPTPGVAFLTDDYGADMGVMISASHNPMPDNGIKFFSAGGHKLPDEVEDEIERVMDDLPEEGPTGHGIGRVIEEAPDARGRYLQHLADAVPTDLSGITVVVDAANGAASVIAPQAYEAAGAKVIAIHNTPNAYNINEKCGSTHMDQIQAAVLEHGADLGLAHDGDADRCLAVDSDGNIVDGDQIMAILAIAMKENSELRKNTLVATVMSNLGLKLAMEKADIQLRTTKVGDRYVLEELNAGGFALGGEQSGHIVLPDHGTTGDGTLTGLSLMARMAATGKPLSELAAAMTVLPQVLINVPVADKSSIMKSANVQAAVAAAEEELGGTGRVLLRPSGTEELFRVMVEAAEQEQARRVAGRLAAVVAEA.

Ser-104 functions as the Phosphoserine intermediate in the catalytic mechanism. Mg(2+) contacts are provided by Ser-104, Asp-243, Asp-245, and Asp-247. Ser-104 carries the post-translational modification Phosphoserine.

The protein belongs to the phosphohexose mutase family. Mg(2+) is required as a cofactor. Post-translationally, activated by phosphorylation.

The catalysed reaction is alpha-D-glucosamine 1-phosphate = D-glucosamine 6-phosphate. Catalyzes the conversion of glucosamine-6-phosphate to glucosamine-1-phosphate. This chain is Phosphoglucosamine mutase, found in Corynebacterium efficiens (strain DSM 44549 / YS-314 / AJ 12310 / JCM 11189 / NBRC 100395).